A 689-amino-acid polypeptide reads, in one-letter code: Transketolase (689 aa).

His-56 contacts substrate. Thiamine diphosphate contacts are provided by residues His-96 and 144 to 146 (GNL). Position 185 (Asp-185) interacts with Mg(2+). Positions 186 and 215 each coordinate thiamine diphosphate. The Mg(2+) site is built by Asn-215 and Ile-217. Substrate contacts are provided by His-289, Arg-380, and Ser-407. His-289 serves as a coordination point for thiamine diphosphate. The active-site Proton donor is Glu-434. Phe-460 is a binding site for thiamine diphosphate. 3 residues coordinate substrate: His-484, Asp-492, and Arg-543.

The protein belongs to the transketolase family. In terms of assembly, homodimer. Requires Mg(2+) as cofactor. It depends on Ca(2+) as a cofactor. Mn(2+) is required as a cofactor. Co(2+) serves as cofactor. The cofactor is thiamine diphosphate.

The catalysed reaction is D-sedoheptulose 7-phosphate + D-glyceraldehyde 3-phosphate = aldehydo-D-ribose 5-phosphate + D-xylulose 5-phosphate. Functionally, catalyzes the transfer of a two-carbon ketol group from a ketose donor to an aldose acceptor, via a covalent intermediate with the cofactor thiamine pyrophosphate. This chain is Transketolase (tkt), found in Aquifex aeolicus (strain VF5).